The following is a 302-amino-acid chain: Putative F-box protein At1g32420 (302 aa).

Basic and acidic residues predominate over residues 1–10 (MKRGNEENNH). A disordered region spans residues 1–27 (MKRGNEENNHKTSSSSSTQRLSRRKIS). The 48-residue stretch at 31-78 (KSGNVNIPLDLTVEILKKLPAKSLLRFQCVSKQWLSIISSRRDFIDSI) folds into the F-box domain.

The polypeptide is Putative F-box protein At1g32420 (Arabidopsis thaliana (Mouse-ear cress)).